Reading from the N-terminus, the 282-residue chain is NADPH-dependent 7-cyano-7-deazaguanine reductase (282 aa).

Residue 88–90 coordinates substrate; that stretch reads IES. Residue 90–91 participates in NADPH binding; the sequence is SK. The active-site Thioimide intermediate is C190. The active-site Proton donor is the D197. 229–230 serves as a coordination point for substrate; that stretch reads HE. An NADPH-binding site is contributed by 258–259; it reads RG.

The protein belongs to the GTP cyclohydrolase I family. QueF type 2 subfamily. Homodimer.

It is found in the cytoplasm. It catalyses the reaction 7-aminomethyl-7-carbaguanine + 2 NADP(+) = 7-cyano-7-deazaguanine + 2 NADPH + 3 H(+). It participates in tRNA modification; tRNA-queuosine biosynthesis. Its function is as follows. Catalyzes the NADPH-dependent reduction of 7-cyano-7-deazaguanine (preQ0) to 7-aminomethyl-7-deazaguanine (preQ1). The chain is NADPH-dependent 7-cyano-7-deazaguanine reductase from Salmonella arizonae (strain ATCC BAA-731 / CDC346-86 / RSK2980).